Consider the following 108-residue polypeptide: MAPRVTPLLAFSLLVLWTFPAPTLGGANDAEDCCLSVTQRPIPGNIVKAFRYLLNEDGCRVPAVVFTTLRGYQLCAPPDQPWVDRIIRRLKKSSAKNKGNSTRRSPVS.

A signal peptide spans 1-25 (MAPRVTPLLAFSLLVLWTFPAPTLG). Cystine bridges form between C33/C59 and C34/C75. N-linked (GlcNAc...) asparagine glycosylation occurs at N100.

This sequence belongs to the intercrine beta (chemokine CC) family. In terms of assembly, interacts with TNFAIP6 (via Link domain). Highly expressed by dendritic cells in mesenteric and peripheral lymph nodes. Significant expression in spleen (T cell zone or periarteriolar lymphatic sheath) and Peyer patches. Low expression in thymus.

The protein resides in the secreted. In terms of biological role, strongly chemotactic for naive (L-selectinhi) CD4 T-cells and for CD8 T-cells and weakly attractive for resting B-cells and memory (L-selectinlo) CD4 T-cells. May play a role in promoting encounters between recirculating T-cells and dendritic cells and in the migration of activated B-cells into the T-zone of secondary lymphoid tissues. Binds to chemokine receptor CCR7. Binds to atypical chemokine receptor ACKR4 and mediates the recruitment of beta-arrestin (ARRB1/2) to ACKR4. The chain is C-C motif chemokine 19 (Ccl19) from Mus musculus (Mouse).